A 274-amino-acid chain; its full sequence is Large ribosomal subunit protein uL2 (274 aa).

Disordered stretches follow at residues 30–54 and 223–274; these read EKSL…IRHK and VAMN…QLKG. Positions 36–48 are enriched in low complexity; the sequence is GKKSSGGRNNNGR. A compositionally biased stretch (basic and acidic residues) spans 263-274; sequence KFSDKYIKQLKG.

The protein belongs to the universal ribosomal protein uL2 family. In terms of assembly, part of the 50S ribosomal subunit. Forms a bridge to the 30S subunit in the 70S ribosome.

Its function is as follows. One of the primary rRNA binding proteins. Required for association of the 30S and 50S subunits to form the 70S ribosome, for tRNA binding and peptide bond formation. It has been suggested to have peptidyltransferase activity; this is somewhat controversial. Makes several contacts with the 16S rRNA in the 70S ribosome. The chain is Large ribosomal subunit protein uL2 from Wolbachia sp. subsp. Brugia malayi (strain TRS).